Consider the following 126-residue polypeptide: Flagellar protein FliT (126 aa).

The tract at residues 1–50 is required for homodimerization; the sequence is MVSPHRLLKDYQQLLSLSQKILHLAISGQWDTLVEQEIVYVQSVEGLVNT. The tract at residues 60 to 98 is fliD binding; sequence MRLHLRQILQEVMDNEAKVKQLLQKRMDELSSLMGQSLK.

It belongs to the FliT family. In terms of assembly, homodimer. Interacts with FliD and FlhC.

It is found in the cytoplasm. Its subcellular location is the cytosol. Dual-function protein that regulates the transcription of class 2 flagellar operons and that also acts as an export chaperone for the filament-capping protein FliD. As a transcriptional regulator, acts as an anti-FlhDC factor; it directly binds FlhC, thus inhibiting the binding of the FlhC/FlhD complex to class 2 promoters, resulting in decreased expression of class 2 flagellar operons. As a chaperone, effects FliD transition to the membrane by preventing its premature polymerization, and by directing it to the export apparatus. The polypeptide is Flagellar protein FliT (Pectobacterium atrosepticum (strain SCRI 1043 / ATCC BAA-672) (Erwinia carotovora subsp. atroseptica)).